The chain runs to 36 residues: MSDIN-like toxin proprotein 10 (36 aa).

A propeptide spanning residues 1–10 (MSDINATRLP) is cleaved from the precursor. The cyclopeptide (Gly-Pro) cross-link spans 11-19 (GAYPPVPMP). The propeptide occupies 20–36 (CVGDADNFTLTRGENLC).

Belongs to the MSDIN fungal toxin family. Processed by the macrocyclase-peptidase enzyme POPB to yield a toxic cyclic nonapeptide. POPB first removes 10 residues from the N-terminus. Conformational trapping of the remaining peptide forces the enzyme to release this intermediate rather than proceed to macrocyclization. The enzyme rebinds the remaining peptide in a different conformation and catalyzes macrocyclization of the N-terminal 9 residues.

In terms of biological role, probable toxin that belongs to the MSDIN-like toxin family responsible for a large number of food poisoning cases and deaths. The chain is MSDIN-like toxin proprotein 10 from Amanita bisporigera (Destroying angel).